The sequence spans 644 residues: Exoribonuclease 2 (644 aa).

Positions 189 to 516 constitute an RNB domain; sequence REDLTALNFV…NHRLLKAVIT (328 aa). The S1 motif domain maps to 561-643; that stretch reads DIRFNAEIID…ETRGIVAKPA (83 aa).

The protein belongs to the RNR ribonuclease family. RNase II subfamily.

It localises to the cytoplasm. It catalyses the reaction Exonucleolytic cleavage in the 3'- to 5'-direction to yield nucleoside 5'-phosphates.. Involved in mRNA degradation. Hydrolyzes single-stranded polyribonucleotides processively in the 3' to 5' direction. The sequence is that of Exoribonuclease 2 from Pectobacterium atrosepticum (strain SCRI 1043 / ATCC BAA-672) (Erwinia carotovora subsp. atroseptica).